The chain runs to 457 residues: Argininosuccinate lyase (457 aa).

It belongs to the lyase 1 family. Argininosuccinate lyase subfamily.

It is found in the cytoplasm. It carries out the reaction 2-(N(omega)-L-arginino)succinate = fumarate + L-arginine. It functions in the pathway amino-acid biosynthesis; L-arginine biosynthesis; L-arginine from L-ornithine and carbamoyl phosphate: step 3/3. The sequence is that of Argininosuccinate lyase from Klebsiella pneumoniae (strain 342).